Consider the following 357-residue polypeptide: Histidine biosynthesis bifunctional protein HisB (357 aa).

The histidinol-phosphatase stretch occupies residues 1–168; sequence MTPILFIDRD…GIAHALADAP (168 aa). D8 acts as the Nucleophile in catalysis. Positions 8, 10, and 128 each coordinate Mg(2+). D10 (proton donor) is an active-site residue. Positions 169 to 357 are imidazoleglycerol-phosphate dehydratase; it reads RIAVVQRDTK…TALPTTKGAL (189 aa).

In the N-terminal section; belongs to the histidinol-phosphatase family. It in the C-terminal section; belongs to the imidazoleglycerol-phosphate dehydratase family. Mg(2+) is required as a cofactor.

It is found in the cytoplasm. The catalysed reaction is D-erythro-1-(imidazol-4-yl)glycerol 3-phosphate = 3-(imidazol-4-yl)-2-oxopropyl phosphate + H2O. The enzyme catalyses L-histidinol phosphate + H2O = L-histidinol + phosphate. It functions in the pathway amino-acid biosynthesis; L-histidine biosynthesis; L-histidine from 5-phospho-alpha-D-ribose 1-diphosphate: step 6/9. It participates in amino-acid biosynthesis; L-histidine biosynthesis; L-histidine from 5-phospho-alpha-D-ribose 1-diphosphate: step 8/9. The sequence is that of Histidine biosynthesis bifunctional protein HisB from Stenotrophomonas maltophilia (strain R551-3).